Reading from the N-terminus, the 495-residue chain is MSEEMNDQMLVRRQKLQELYDLGIDPFGSKFDRSGLSSDLKEEWDQYSKEELVEKEADSHVAIAGRLMTKRGKGKAGFAHVQDLAGQIQIYVRKDQVGDDEFDLWKNADLGDIVGVEGVMFKTNTGELSVKAKKFTLLTKSLRPLPDKFHGLQDIEQRYRQRYLDLITNEDSTRTFINRSKIIQEMRNYLNNKGFLEVETPMMHQIAGGAAARPFVTHHNALDATLYMRIAIELHLKRLIVGGLEKVYEIGRVFRNEGVSTRHNPEFTMIELYEAYADYHDIMDLTESMVRHIANEVLGSAKVQYNGETIDLESAWTRLHIVDAVKEATGVDFYEVKSDDEAKALAKEHGIEIKDTMKYGHILNEFFEQKVEETLIQPTFIYGHPTEISPLAKKNPEDPRFTDRFELFIVGREHANAFTELNDPIDQKGRFEAQLVEKAQGNDEAHEMDEDYIEALEYGMPPTGGLGIGIDRLVMLLTDSPSIRDVLLFPYMRQK.

Mg(2+) is bound by residues Glu-406 and Glu-413.

It belongs to the class-II aminoacyl-tRNA synthetase family. As to quaternary structure, homodimer. Mg(2+) is required as a cofactor.

Its subcellular location is the cytoplasm. The enzyme catalyses tRNA(Lys) + L-lysine + ATP = L-lysyl-tRNA(Lys) + AMP + diphosphate. This chain is Lysine--tRNA ligase, found in Staphylococcus aureus (strain MW2).